We begin with the raw amino-acid sequence, 349 residues long: uncharacterized protein (349 aa).

The next 10 membrane-spanning stretches (helical) occupy residues 15 to 35, 53 to 73, 91 to 111, 120 to 140, 147 to 167, 179 to 199, 218 to 238, 248 to 268, 276 to 296, and 302 to 322; these read VHSPIYLALAVVIFSAANPVT, ISFCNVLFVGNLCALGLMILI, WFLLTVTAILSRAIAPGLMFS, NVVLIGRLEPVFTLILSILLL, LSMVATLISFVGVAVTVFWGV, FGLGESFVAIAAFISAITTIL, LLGTFVFFWIAVIIYGFDHFM, WMLIYGAIIVVVGQVAWLAGL, INLASLVTPILAIIFAYLILL, and AQYLGGILLLLGAILSFIDNL. 2 EamA domains span residues 39–164 and 191–319; these read IELG…VTVF and FISA…LSFI.

The protein belongs to the EamA transporter family.

The protein localises to the cell membrane. This is an uncharacterized protein from Synechocystis sp. (strain ATCC 27184 / PCC 6803 / Kazusa).